A 117-amino-acid polypeptide reads, in one-letter code: 16 kDa protein (117 aa).

The protein is 16 kDa protein of Tobacco rattle virus (strain PLB).